A 1130-amino-acid chain; its full sequence is Putative beta-hexosaminidase (1130 aa).

A signal peptide spans 1–23; sequence MKWVKSGVGILGILLIICHAVTS. 2 stretches are compositionally biased toward low complexity: residues 1001-1030 and 1037-1072; these read PGQM…LPAQ and LTGQ…QRTG. Disordered stretches follow at residues 1001–1075 and 1102–1130; these read PGQM…GVVP and QMRG…QQAG.

The protein belongs to the glycosyl hydrolase 20 family. In terms of tissue distribution, prismatic layer of shell (at protein level). Expressed primarily in the mantle with highest level in the mantle edge and lower level in the mantle pallium.

The protein resides in the secreted. The catalysed reaction is Hydrolysis of terminal non-reducing N-acetyl-D-hexosamine residues in N-acetyl-beta-D-hexosaminides.. It participates in glycan degradation; chitin degradation. The sequence is that of Putative beta-hexosaminidase from Pinctada maxima (Silver-lipped pearl oyster).